A 906-amino-acid chain; its full sequence is Serine-aspartate repeat-containing protein C (906 aa).

The signal sequence occupies residues 1 to 50; the sequence is MNNKKTATNRKGMIPNRLNKFSIRKYSVGTASILVGTTLIFGLSGHEAKA. The segment at 51-127 is disordered; that stretch reads AEHTNGELNQ…QPTKKNNDAT (77 aa). The segment at 51 to 486 is ligand binding A region; it reads AEHTNGELNQ…GSSTANGDQK (436 aa). Composition is skewed to polar residues over residues 56 to 71 and 80 to 119; these read GELN…PSEN and RQQN…STQP. 2 CNA-B domains span residues 487–597 and 598–708; these read KYNL…YKTP and KYSL…EEET. The interval 669–881 is disordered; the sequence is KQTGTNTTED…TGSENNGSNN (213 aa). Acidic residues-rich tracts occupy residues 676–686 and 703–845; these read TEDDKDADGGE and YFEE…DSDS. The LPXTG sorting signal motif lies at 869 to 873; the sequence is LPETG. T872 carries the pentaglycyl murein peptidoglycan amidated threonine modification. A propeptide spans 873 to 906 (removed by sortase); it reads GSENNGSNNATLFGGLFAALGSLLLFGRRKKQNK.

The protein belongs to the serine-aspartate repeat-containing protein (SDr) family. Homodimerizes; via N2-Domain. Interacts with host NRXN1; this interaction mediates bacterial attachment to host cells.

Its subcellular location is the secreted. It is found in the cell wall. Its function is as follows. Cell surface-associated calcium-binding protein which plays an important role in adhesion and pathogenesis. Mediates interactions with components of the extracellular matrix such as host NRXN1 to promote bacterial adhesion. This is Serine-aspartate repeat-containing protein C (sdrC) from Staphylococcus aureus (strain MRSA252).